A 127-amino-acid polypeptide reads, in one-letter code: Small ribosomal subunit protein uS12 (127 aa).

D89 carries the 3-methylthioaspartic acid modification. The segment at 101–127 is disordered; that stretch reads ALDTSGVAGRTQRRSKYGAKRPKEAKK. A compositionally biased stretch (basic residues) spans 111–127; sequence TQRRSKYGAKRPKEAKK.

It belongs to the universal ribosomal protein uS12 family. As to quaternary structure, part of the 30S ribosomal subunit. Contacts proteins S8 and S17. May interact with IF1 in the 30S initiation complex.

In terms of biological role, with S4 and S5 plays an important role in translational accuracy. Functionally, interacts with and stabilizes bases of the 16S rRNA that are involved in tRNA selection in the A site and with the mRNA backbone. Located at the interface of the 30S and 50S subunits, it traverses the body of the 30S subunit contacting proteins on the other side and probably holding the rRNA structure together. The combined cluster of proteins S8, S12 and S17 appears to hold together the shoulder and platform of the 30S subunit. The sequence is that of Small ribosomal subunit protein uS12 from Flavobacterium psychrophilum (strain ATCC 49511 / DSM 21280 / CIP 103535 / JIP02/86).